The following is a 1062-amino-acid chain: Isoleucine--tRNA ligase (1062 aa).

Positions 47–57 match the 'HIGH' region motif; that stretch reads PYTTGHIHLGT. The 'KMSKS' region signature appears at 591–595; the sequence is KMSKS. Lysine 594 is an ATP binding site.

Belongs to the class-I aminoacyl-tRNA synthetase family. IleS type 2 subfamily. In terms of assembly, monomer. Zn(2+) is required as a cofactor.

The protein localises to the cytoplasm. It catalyses the reaction tRNA(Ile) + L-isoleucine + ATP = L-isoleucyl-tRNA(Ile) + AMP + diphosphate. In terms of biological role, catalyzes the attachment of isoleucine to tRNA(Ile). As IleRS can inadvertently accommodate and process structurally similar amino acids such as valine, to avoid such errors it has two additional distinct tRNA(Ile)-dependent editing activities. One activity is designated as 'pretransfer' editing and involves the hydrolysis of activated Val-AMP. The other activity is designated 'posttransfer' editing and involves deacylation of mischarged Val-tRNA(Ile). The sequence is that of Isoleucine--tRNA ligase from Methanospirillum hungatei JF-1 (strain ATCC 27890 / DSM 864 / NBRC 100397 / JF-1).